Here is an 868-residue protein sequence, read N- to C-terminus: DNA mismatch repair protein MutS (868 aa).

ATP is bound at residue 620-627; the sequence is GPNMSGKS.

It belongs to the DNA mismatch repair MutS family.

Functionally, this protein is involved in the repair of mismatches in DNA. It is possible that it carries out the mismatch recognition step. This protein has a weak ATPase activity. The chain is DNA mismatch repair protein MutS from Flavobacterium johnsoniae (strain ATCC 17061 / DSM 2064 / JCM 8514 / BCRC 14874 / CCUG 350202 / NBRC 14942 / NCIMB 11054 / UW101) (Cytophaga johnsonae).